Consider the following 416-residue polypeptide: Multifunctional CCA protein (416 aa).

The ATP site is built by Gly-8 and Arg-11. CTP contacts are provided by Gly-8 and Arg-11. Residues Asp-21 and Asp-23 each coordinate Mg(2+). 3 residues coordinate ATP: Arg-91, Arg-138, and Arg-141. 3 residues coordinate CTP: Arg-91, Arg-138, and Arg-141. The region spanning 229–331 (TGLHQELVSD…YELLQRCDAF (103 aa)) is the HD domain.

This sequence belongs to the tRNA nucleotidyltransferase/poly(A) polymerase family. Bacterial CCA-adding enzyme type 1 subfamily. In terms of assembly, monomer. Can also form homodimers and oligomers. Requires Mg(2+) as cofactor. Ni(2+) serves as cofactor.

It carries out the reaction a tRNA precursor + 2 CTP + ATP = a tRNA with a 3' CCA end + 3 diphosphate. The enzyme catalyses a tRNA with a 3' CCA end + 2 CTP + ATP = a tRNA with a 3' CCACCA end + 3 diphosphate. Catalyzes the addition and repair of the essential 3'-terminal CCA sequence in tRNAs without using a nucleic acid template. Adds these three nucleotides in the order of C, C, and A to the tRNA nucleotide-73, using CTP and ATP as substrates and producing inorganic pyrophosphate. tRNA 3'-terminal CCA addition is required both for tRNA processing and repair. Also involved in tRNA surveillance by mediating tandem CCA addition to generate a CCACCA at the 3' terminus of unstable tRNAs. While stable tRNAs receive only 3'-terminal CCA, unstable tRNAs are marked with CCACCA and rapidly degraded. The polypeptide is Multifunctional CCA protein (Xylella fastidiosa (strain M23)).